The chain runs to 84 residues: DNA-directed RNA polymerase subunit Rpo5 (84 aa).

It belongs to the archaeal Rpo5/eukaryotic RPB5 RNA polymerase subunit family. As to quaternary structure, part of the 13-subunit RNA polymerase complex.

It localises to the cytoplasm. It catalyses the reaction RNA(n) + a ribonucleoside 5'-triphosphate = RNA(n+1) + diphosphate. DNA-dependent RNA polymerase (RNAP) catalyzes the transcription of DNA into RNA using the four ribonucleoside triphosphates as substrates. This Saccharolobus solfataricus (strain ATCC 35092 / DSM 1617 / JCM 11322 / P2) (Sulfolobus solfataricus) protein is DNA-directed RNA polymerase subunit Rpo5.